Reading from the N-terminus, the 113-residue chain is MEIEKNNRINSLLEFYEQLLTPKQKEYITLYYADDYSLGEISEEFQVSRQAVYDNIKRTVNILEKYEQQLHLLSNFEVRNAKFDQIRAYINQKYPEDTELKHFLDDLEKSEEE.

This sequence belongs to the UPF0122 family.

Might take part in the signal recognition particle (SRP) pathway. This is inferred from the conservation of its genetic proximity to ftsY/ffh. May be a regulatory protein. This Pediococcus pentosaceus (strain ATCC 25745 / CCUG 21536 / LMG 10740 / 183-1w) protein is UPF0122 protein PEPE_0845.